The sequence spans 285 residues: Inhibitor of growth protein 5 (285 aa).

The tract at residues 116–225 (EKASSTRAKS…ATHPSDVMDM (110 aa)) is disordered. The segment covering 131 to 149 (KKGRKKTKDSKTTGKKKKS) has biased composition (basic residues). Residues 160 to 178 (NNQSNANSSVNSSSNAGQG) show a composition bias toward low complexity. A PHD-type zinc finger spans residues 232–281 (PTYCLCHQVSYGEMIGCDNPDCPIEWFHFACVGLTTKPKGKWFCPKCTQD). Zn(2+) is bound by residues C235, C237, C248, C253, H259, C262, C275, and C278.

Belongs to the ING family. Component of the Enok complex composed of at least Br140, enok, Eaf6 and Ing5.

The protein resides in the nucleus. It localises to the chromosome. Component of the Enok complex which has a histone H3 acetyltransferase activity. This is Inhibitor of growth protein 5 from Drosophila melanogaster (Fruit fly).